The primary structure comprises 210 residues: Probable GTP-binding protein EngB (210 aa).

An EngB-type G domain is found at 25–199 (TGIEVAFAGR…RQKLDTWFSE (175 aa)). GTP is bound by residues 33-40 (GRSNAGKS), 60-64 (GRTQL), 78-81 (DLPG), 145-148 (TKTD), and 178-180 (FSS). Residues S40 and T62 each contribute to the Mg(2+) site.

This sequence belongs to the TRAFAC class TrmE-Era-EngA-EngB-Septin-like GTPase superfamily. EngB GTPase family. The cofactor is Mg(2+).

Functionally, necessary for normal cell division and for the maintenance of normal septation. The polypeptide is Probable GTP-binding protein EngB (Escherichia coli O6:K15:H31 (strain 536 / UPEC)).